Consider the following 1201-residue polypeptide: Autophagy-related protein 11 (1201 aa).

The disordered stretch occupies residues 90 to 109 (FPFLGRPSTPTKGSDNSTGT). The segment covering 97–109 (STPTKGSDNSTGT) has biased composition (polar residues). The stretch at 418 to 452 (LLRSDDMVRSLRDEKSKLEEKVKGSESRIRKLEDL) forms a coiled coil. Disordered stretches follow at residues 458–503 (HMGR…SEEK) and 525–545 (KLQK…QEVQ). The span at 485 to 499 (RRSSVSSRRMSSNQS) shows a compositional bias: low complexity. A compositionally biased stretch (basic and acidic residues) spans 525-542 (KLQKDAHAERQSNTDKIQ). Coiled-coil stretches lie at residues 566-670 (RRFL…ALQA) and 710-828 (SAKA…WKER). Disordered stretches follow at residues 1052–1076 (SMNG…DDEN) and 1115–1201 (DARG…LQGP). The segment covering 1133 to 1166 (RTLSKSLDSRRNSSNSKKGPATPSQRGNDSTTDL) has biased composition (polar residues). Over residues 1191 to 1201 (EEVRRDQLQGP) the composition is skewed to basic and acidic residues.

It belongs to the ATG11 family. Homodimer and potential homooligomers.

The protein resides in the preautophagosomal structure membrane. In terms of biological role, selective autophagy-specific protein required for pexophagy and mitophagy. In contrast to its Saccharomyces cerevisiae ATG11 ortholog, is not involved in non-selective autophagy nor in cytoplasm to vacuole transport (Cvt). The protein is Autophagy-related protein 11 of Aspergillus oryzae (strain ATCC 42149 / RIB 40) (Yellow koji mold).